The chain runs to 490 residues: Dipeptide and tripeptide permease A (490 aa).

The Cytoplasmic segment spans residues Met-1–Arg-34. Residues Phe-35 to Thr-55 traverse the membrane as a helical segment. The Periplasmic segment spans residues Glu-56–Ser-59. Residues Ile-60–Leu-80 form a helical membrane-spanning segment. The Cytoplasmic segment spans residues Gly-81–Arg-89. A helical membrane pass occupies residues Val-90 to His-110. Residue Asp-111 is a topological domain, periplasmic. A helical membrane pass occupies residues Leu-112–Asn-132. The Cytoplasmic segment spans residues Pro-133 to Thr-153. Residues Met-154–Ala-174 traverse the membrane as a helical segment. Over Ala-175–Arg-176 the chain is Periplasmic. The helical transmembrane segment at Phe-177–Phe-197 threads the bilayer. The Cytoplasmic portion of the chain corresponds to Met-198–Gln-217. A helical membrane pass occupies residues Val-218–Leu-238. At Leu-239 to Arg-246 the chain is on the periplasmic side. Residues Trp-247–Leu-267 traverse the membrane as a helical segment. Topologically, residues Gln-268–Lys-274 are cytoplasmic. A helical transmembrane segment spans residues Met-275–Met-295. Over Pro-296–Gln-320 the chain is Periplasmic. Residues Tyr-321–Asn-341 form a helical membrane-spanning segment. The Cytoplasmic portion of the chain corresponds to Lys-342–Lys-352. The helical transmembrane segment at Phe-353–Phe-373 threads the bilayer. Residues Ala-374 to Asn-383 lie on the Periplasmic side of the membrane. The chain crosses the membrane as a helical span at residues Trp-384–Leu-404. Residues Ala-405–Arg-414 lie on the Cytoplasmic side of the membrane. The helical transmembrane segment at Leu-415–Gly-435 threads the bilayer. The Periplasmic portion of the chain corresponds to Lys-436–His-460. A helical membrane pass occupies residues Val-461–Pro-481. Residues Lys-482 to Asp-490 are Cytoplasmic-facing.

This sequence belongs to the major facilitator superfamily. Proton-dependent oligopeptide transporter (POT/PTR) (TC 2.A.17) family. DtpA subfamily.

Its subcellular location is the cell inner membrane. Functionally, proton-dependent permease that transports di- and tripeptides. The sequence is that of Dipeptide and tripeptide permease A from Edwardsiella piscicida.